The primary structure comprises 264 residues: MKIEAVIFDWAGTTVDYGCFAPLEVFIKIFRKRGVKITDEEARKPMGLLKIDHVRALTEMPRIANEWERVFGHLPTEADIHEMYEEFEEILFTILPHYATPIDGVKEVVASLRKRGLKIGSTTGYTREMMDIVAKEAEIQGYKPDVLVTPDDVSAGRPYPWMCYKNAMELGVYPMNHMIKVGDTVSDMKEGRNAGMWTVGVILGSSELGLSEWAAETMDPVELREKMEVVRKRFVENGAHFTIETMQGLENVIEQIEKQEFIIS.

D9 acts as the Nucleophile in catalysis. 2 residues coordinate Mg(2+): D9 and A11. K50 (schiff-base intermediate with substrate) is an active-site residue. D183 contacts Mg(2+).

This sequence belongs to the HAD-like hydrolase superfamily. PhnX family. In terms of assembly, homodimer. It depends on Mg(2+) as a cofactor.

It carries out the reaction phosphonoacetaldehyde + H2O = acetaldehyde + phosphate + H(+). In terms of biological role, involved in phosphonate degradation. The sequence is that of Phosphonoacetaldehyde hydrolase from Bacillus cereus (strain AH187).